Reading from the N-terminus, the 323-residue chain is Coiled-coil domain-containing protein 160 (323 aa).

Positions 143–290 (SKLRLNLLNE…IKNELRTEKS (148 aa)) form a coiled coil.

It belongs to the CCDC160 family.

The protein is Coiled-coil domain-containing protein 160 (CCDC160) of Bos taurus (Bovine).